We begin with the raw amino-acid sequence, 485 residues long: Adenosylhomocysteinase (485 aa).

Substrate is bound by residues T64, D139, and E205. Residue 206–208 (TTT) coordinates NAD(+). The substrate site is built by K235 and D239. Residues N240, 269-274 (GYGDVG), E292, N327, 348-350 (IGH), and N397 contribute to the NAD(+) site.

This sequence belongs to the adenosylhomocysteinase family. As to quaternary structure, homotetramer. NAD(+) is required as a cofactor.

It catalyses the reaction S-adenosyl-L-homocysteine + H2O = L-homocysteine + adenosine. It participates in amino-acid biosynthesis; L-homocysteine biosynthesis; L-homocysteine from S-adenosyl-L-homocysteine: step 1/1. Adenosylhomocysteine is a competitive inhibitor of S-adenosyl-L-methionine-dependent methyl transferase reactions; therefore adenosylhomocysteinase may play a key role in the control of methylations via regulation of the intracellular concentration of adenosylhomocysteine. The polypeptide is Adenosylhomocysteinase (SAHH) (Catharanthus roseus (Madagascar periwinkle)).